Consider the following 440-residue polypeptide: Probable exopolygalacturonase C (440 aa).

An N-terminal signal peptide occupies residues 1–21 (MLITNPALLGILASLVPLALG). Asn-84 and Asn-151 each carry an N-linked (GlcNAc...) asparagine glycan. PbH1 repeat units lie at residues 188–210 (GDDITVSHAIVDATSTGGFPFNT), 217–238 (GTNISITDSVMFNGDDAIAVNT), and 240–261 (SHNIVFARNTIGYQSHGMSIGS). Asn-219 carries an N-linked (GlcNAc...) asparagine glycan. The active-site Proton donor is Asp-231. The active site involves His-255. Asn-271 carries N-linked (GlcNAc...) asparagine glycosylation. Residues 272 to 293 (ITNLRFEDVTVIDALYAARFKS) form a PbH1 4 repeat. A glycan (N-linked (GlcNAc...) asparagine) is linked at Asn-313. Cysteines 389 and 395 form a disulfide. N-linked (GlcNAc...) asparagine glycosylation occurs at Asn-434.

It belongs to the glycosyl hydrolase 28 family.

It localises to the secreted. The catalysed reaction is [(1-&gt;4)-alpha-D-galacturonosyl](n) + H2O = alpha-D-galacturonate + [(1-&gt;4)-alpha-D-galacturonosyl](n-1). In terms of biological role, specific in hydrolyzing the terminal glycosidic bond of polygalacturonic acid and oligogalacturonates. The chain is Probable exopolygalacturonase C (pgxC) from Aspergillus fumigatus (strain CBS 144.89 / FGSC A1163 / CEA10) (Neosartorya fumigata).